The primary structure comprises 684 residues: Coiled-coil domain-containing protein 62 (684 aa).

Coiled-coil stretches lie at residues 11 to 160 and 199 to 322; these read RQNI…QALT and TCIV…ESKA. The interval 579 to 603 is disordered; sequence SLGSSKSALREDETESSSNKKNSPT. The span at 594–603 shows a compositional bias: polar residues; it reads SSSNKKNSPT. Short sequence motifs (LXXLL motif) lie at residues 634–638 and 650–654; these read LQRLL and LSTLL. Residues 657-684 are disordered; the sequence is SHENLTGSATNKSEVPEESAQKNTFVSY. The span at 659 to 669 shows a compositional bias: polar residues; that stretch reads ENLTGSATNKS.

Interacts with ESR1 and ESR2 in the presence of estradiol/E2. The interaction with ESR2 recruits CCDC62 to ER target genes, including cyclin-D1/CCND1 AP-1 promoter. Interacts with GOPC. In terms of tissue distribution, highly expressed in adult testis. Expressed in both prostate epithelial and stromal cells, with predominant expression in epithelial cells (at protein level). Not detected in prostate by RT-PCR. Overexpressed in various cancers.

The protein resides in the cytoplasm. Its subcellular location is the nucleus. It localises to the cytoplasmic vesicle. The protein localises to the secretory vesicle. It is found in the acrosome. Nuclear receptor coactivator that can enhance preferentially estrogen receptors ESR1 and ESR2 transactivation. Also modulates progesterone/PGR, glucocorticoid/NR3C1 and androgen/AR receptors transactivation, although at lower level; little effect on vitamin D receptor/VDR. Required for normal spermiogenesis. It probably plays a role in acrosome formation. The polypeptide is Coiled-coil domain-containing protein 62 (CCDC62) (Homo sapiens (Human)).